The sequence spans 255 residues: MLNKIIETKKEEIQNLQLPEQQNVAKRSFLDALSNPNRELALIAEVKKASPSKGLIKENFQPVEIAKAYEKGKADALSVLTDQHYFQGHRTFLSDIKQHVSVPVLRKDFIIDSIQVEESARIGADAILLIGEALEPLKLQELYLQAAEKELDCLVEVHSLETLEKLLAVFTPKIIGINNRNLHTFETSLQQTKEIAKHVPKDQLLVSESGIYLYDDVSYVKEAGAKAILVGESLMRQDNQTKAIEKLFGESEYAH.

Belongs to the TrpC family.

The catalysed reaction is 1-(2-carboxyphenylamino)-1-deoxy-D-ribulose 5-phosphate + H(+) = (1S,2R)-1-C-(indol-3-yl)glycerol 3-phosphate + CO2 + H2O. It participates in amino-acid biosynthesis; L-tryptophan biosynthesis; L-tryptophan from chorismate: step 4/5. This is Indole-3-glycerol phosphate synthase (trpC) from Priestia megaterium (strain ATCC 12872 / QMB1551) (Bacillus megaterium).